Reading from the N-terminus, the 2839-residue chain is Bifunctional DNA-directed RNA polymerase subunit beta-beta' (2839 aa).

The segment at 1–1433 is DNA-directed RNA polymerase subunit beta; the sequence is MVDSSYMCAS…CLNVALKQNN (1433 aa). The segment at 1436–2839 is DNA-directed RNA polymerase subunit beta'; it reads IEDISHTNIA…KESVAESRYN (1404 aa). Zn(2+)-binding residues include cysteine 1501, cysteine 1503, cysteine 1516, and cysteine 1519. Mg(2+)-binding residues include aspartate 1893, aspartate 1895, and aspartate 1897. Cysteine 2238, cysteine 2312, cysteine 2319, and cysteine 2322 together coordinate Zn(2+).

The protein in the N-terminal section; belongs to the RNA polymerase beta chain family. This sequence in the C-terminal section; belongs to the RNA polymerase beta' chain family. The RNAP catalytic core consists of 2 alpha, 1 beta/beta' and 1 omega subunit. When a sigma factor is associated with the core the holoenzyme is formed, which can initiate transcription. Requires Mg(2+) as cofactor. Zn(2+) is required as a cofactor.

The catalysed reaction is RNA(n) + a ribonucleoside 5'-triphosphate = RNA(n+1) + diphosphate. In terms of biological role, DNA-dependent RNA polymerase catalyzes the transcription of DNA into RNA using the four ribonucleoside triphosphates as substrates. The sequence is that of Bifunctional DNA-directed RNA polymerase subunit beta-beta' (rpoBC) from Wolbachia sp. subsp. Brugia malayi (strain TRS).